Here is a 142-residue protein sequence, read N- to C-terminus: Transcriptional regulator MraZ (142 aa).

SpoVT-AbrB domains are found at residues A5–E51 and A77–T120.

This sequence belongs to the MraZ family. Forms oligomers.

It localises to the cytoplasm. Its subcellular location is the nucleoid. This chain is Transcriptional regulator MraZ, found in Paraburkholderia xenovorans (strain LB400).